The following is a 133-amino-acid chain: Snaclec A9 (133 aa).

Cystine bridges form between Cys-4/Cys-15, Cys-32/Cys-131, and Cys-106/Cys-123. Residues 11-132 (YEGHCYKVFN…CGQPYRFTCE (122 aa)) enclose the C-type lectin domain.

This sequence belongs to the snaclec family. In terms of assembly, heterodimer; disulfide-linked. Expressed by the venom gland.

It is found in the secreted. In terms of biological role, interferes with one step of hemostasis (modulation of platelet aggregation, or coagulation cascade, for example). This is Snaclec A9 from Macrovipera lebetinus (Levantine viper).